A 257-amino-acid chain; its full sequence is Diphthine synthase (257 aa).

S-adenosyl-L-methionine-binding positions include isoleucine 11, aspartate 89, isoleucine 92, 117–118 (SV), leucine 169, leucine 210, and histidine 235.

Belongs to the diphthine synthase family. In terms of assembly, homodimer.

The catalysed reaction is 2-[(3S)-amino-3-carboxypropyl]-L-histidyl-[translation elongation factor 2] + 3 S-adenosyl-L-methionine = diphthine-[translation elongation factor 2] + 3 S-adenosyl-L-homocysteine + 3 H(+). Its pathway is protein modification; peptidyl-diphthamide biosynthesis. S-adenosyl-L-methionine-dependent methyltransferase that catalyzes the trimethylation of the amino group of the modified target histidine residue in translation elongation factor 2 (EF-2), to form an intermediate called diphthine. The three successive methylation reactions represent the second step of diphthamide biosynthesis. The sequence is that of Diphthine synthase from Saccharolobus solfataricus (strain ATCC 35092 / DSM 1617 / JCM 11322 / P2) (Sulfolobus solfataricus).